Reading from the N-terminus, the 225-residue chain is Ferric nitrobindin-like protein (225 aa).

A GXWXGXG motif is present at residues 78 to 84; the sequence is GVWRGTG.

It belongs to the nitrobindin family.

The chain is Ferric nitrobindin-like protein from Corynebacterium diphtheriae (strain ATCC 700971 / NCTC 13129 / Biotype gravis).